The following is a 394-amino-acid chain: Phosphoglycerate kinase (394 aa).

Substrate is bound by residues 21-23 (DFN), Arg-36, 59-62 (HLGR), Arg-118, and Arg-151. Ser-183 carries the post-translational modification Phosphoserine. Residues Lys-201 and Gly-292 each contribute to the ATP site. Position 299 is a phosphothreonine (Thr-299). Residues Glu-323 and 350-353 (GGDS) contribute to the ATP site.

It belongs to the phosphoglycerate kinase family. Monomer.

The protein localises to the cytoplasm. The catalysed reaction is (2R)-3-phosphoglycerate + ATP = (2R)-3-phospho-glyceroyl phosphate + ADP. It participates in carbohydrate degradation; glycolysis; pyruvate from D-glyceraldehyde 3-phosphate: step 2/5. This chain is Phosphoglycerate kinase, found in Bacillus cereus (strain ATCC 10987 / NRS 248).